A 258-amino-acid polypeptide reads, in one-letter code: Imidazole glycerol phosphate synthase subunit HisF (258 aa).

Residues aspartate 11 and aspartate 130 contribute to the active site.

This sequence belongs to the HisA/HisF family. As to quaternary structure, heterodimer of HisH and HisF.

The protein localises to the cytoplasm. The enzyme catalyses 5-[(5-phospho-1-deoxy-D-ribulos-1-ylimino)methylamino]-1-(5-phospho-beta-D-ribosyl)imidazole-4-carboxamide + L-glutamine = D-erythro-1-(imidazol-4-yl)glycerol 3-phosphate + 5-amino-1-(5-phospho-beta-D-ribosyl)imidazole-4-carboxamide + L-glutamate + H(+). The protein operates within amino-acid biosynthesis; L-histidine biosynthesis; L-histidine from 5-phospho-alpha-D-ribose 1-diphosphate: step 5/9. Its function is as follows. IGPS catalyzes the conversion of PRFAR and glutamine to IGP, AICAR and glutamate. The HisF subunit catalyzes the cyclization activity that produces IGP and AICAR from PRFAR using the ammonia provided by the HisH subunit. The polypeptide is Imidazole glycerol phosphate synthase subunit HisF (Blochmanniella floridana).